Consider the following 357-residue polypeptide: GDP-mannose transporter 2 (357 aa).

The Cytoplasmic segment spans residues 1–43 (MASTRNGISKDELLPTYELQSQRDVENSGSVTSFASKISNNAA). A helical membrane pass occupies residues 44–64 (AAVLAYCLSSISMTLVNKYVV). Residues 65-68 (SGAS) are Lumenal-facing. Residues 69 to 89 (WNLSFLYLAIQSFIGTVAIMV) traverse the membrane as a helical segment. Topologically, residues 90–107 (CKKAGLIQNLGLFDLKKA) are cytoplasmic. A helical membrane pass occupies residues 108 to 128 (QTWLPISLLLVGMIYTGNKAL). Residue Gln-129 is a topological domain, lumenal. Residues 130–150 (FLSVPVYTIFKNLTIIVIAYG) traverse the membrane as a helical segment. Over 151–161 (EVFMVGGSVKP) the chain is Cytoplasmic. Residues 162–182 (LALLSFGLMVLSSVVAAWADI) form a helical membrane-spanning segment. Topologically, residues 183 to 196 (QIATAATAKASSDS) are lumenal. A helical transmembrane segment spans residues 197–217 (AVATLSALNAGYAWMGTNVVF). The Cytoplasmic segment spans residues 218-238 (SASYALGMRRVIKKTNFDNWD). Residues 239–259 (VMFYNNLLSVPILLLSSLLVE) traverse the membrane as a helical segment. Residues 260 to 277 (DWSSENLQRNFPAESRQS) lie on the Lumenal side of the membrane. A helical membrane pass occupies residues 278-298 (LVIGIFYSGVAAIFISYCTAW). The Cytoplasmic segment spans residues 299-306 (CVRATSST). Residues 307 to 327 (TYAMVGALNKLPLAVAGIVFF) form a helical membrane-spanning segment. The Lumenal portion of the chain corresponds to 328–332 (AAPVT). A helical membrane pass occupies residues 333 to 352 (FGSVSAIVLGFISGLVYTWA). Residues 353-357 (KSTGA) are Cytoplasmic-facing.

It belongs to the TPT transporter family. SLC35D subfamily. As to quaternary structure, homooligomer.

It is found in the golgi apparatus membrane. The protein resides in the cytoplasmic vesicle membrane. It localises to the endoplasmic reticulum membrane. Its function is as follows. Involved in the import of GDP-mannose from the cytoplasm into the Golgi lumen. The protein is GDP-mannose transporter 2 (gmt2) of Emericella nidulans (strain FGSC A4 / ATCC 38163 / CBS 112.46 / NRRL 194 / M139) (Aspergillus nidulans).